Consider the following 556-residue polypeptide: Urocanate hydratase (556 aa).

NAD(+) contacts are provided by residues 52-53 (GG), Q130, 176-178 (GMG), E196, R201, 242-243 (NA), 263-267 (QTSAH), 273-274 (YL), and Y322. C410 is an active-site residue. G492 is a binding site for NAD(+).

It belongs to the urocanase family. Requires NAD(+) as cofactor.

Its subcellular location is the cytoplasm. The catalysed reaction is 4-imidazolone-5-propanoate = trans-urocanate + H2O. It functions in the pathway amino-acid degradation; L-histidine degradation into L-glutamate; N-formimidoyl-L-glutamate from L-histidine: step 2/3. In terms of biological role, catalyzes the conversion of urocanate to 4-imidazolone-5-propionate. This Bradyrhizobium sp. (strain BTAi1 / ATCC BAA-1182) protein is Urocanate hydratase.